The sequence spans 380 residues: Cytochrome b (380 aa).

4 helical membrane passes run 34–54, 78–99, 114–134, and 179–199; these read FGSLLAVCLMTQILTGLLLAM, WLIRNLHANGASFFFICIFLHI, WNTGVILLLTLMATAFVGYVL, and FFALHFLLPFAIAGITIIHLT. Heme b contacts are provided by histidine 84 and histidine 98. Positions 183 and 197 each coordinate heme b. Histidine 202 contacts a ubiquinone. 4 helical membrane passes run 227-247, 289-309, 321-341, and 348-368; these read FKDILGLTLMLTPFLTLALFS, LGGVLALAASVLILFLIPFLH, LSQTLFWLLVANLLILTWIGS, and FIIIGQMASLSYFTILLILFP.

This sequence belongs to the cytochrome b family. As to quaternary structure, the cytochrome bc1 complex contains 11 subunits: 3 respiratory subunits (MT-CYB, CYC1 and UQCRFS1), 2 core proteins (UQCRC1 and UQCRC2) and 6 low-molecular weight proteins (UQCRH/QCR6, UQCRB/QCR7, UQCRQ/QCR8, UQCR10/QCR9, UQCR11/QCR10 and a cleavage product of UQCRFS1). This cytochrome bc1 complex then forms a dimer. Heme b is required as a cofactor.

The protein localises to the mitochondrion inner membrane. In terms of biological role, component of the ubiquinol-cytochrome c reductase complex (complex III or cytochrome b-c1 complex) that is part of the mitochondrial respiratory chain. The b-c1 complex mediates electron transfer from ubiquinol to cytochrome c. Contributes to the generation of a proton gradient across the mitochondrial membrane that is then used for ATP synthesis. The polypeptide is Cytochrome b (MT-CYB) (Gallus gallus (Chicken)).